A 206-amino-acid polypeptide reads, in one-letter code: N-(5'-phosphoribosyl)anthranilate isomerase (206 aa).

It belongs to the TrpF family.

The catalysed reaction is N-(5-phospho-beta-D-ribosyl)anthranilate = 1-(2-carboxyphenylamino)-1-deoxy-D-ribulose 5-phosphate. The protein operates within amino-acid biosynthesis; L-tryptophan biosynthesis; L-tryptophan from chorismate: step 3/5. This chain is N-(5'-phosphoribosyl)anthranilate isomerase, found in Rubrobacter xylanophilus (strain DSM 9941 / JCM 11954 / NBRC 16129 / PRD-1).